The following is a 229-amino-acid chain: 7-cyano-7-deazaguanine synthase (229 aa).

An ATP-binding site is contributed by 14 to 24 (LSGGQDSTTCL). Zn(2+) contacts are provided by C192, C200, C203, and C206.

This sequence belongs to the QueC family. Requires Zn(2+) as cofactor.

The catalysed reaction is 7-carboxy-7-deazaguanine + NH4(+) + ATP = 7-cyano-7-deazaguanine + ADP + phosphate + H2O + H(+). The protein operates within purine metabolism; 7-cyano-7-deazaguanine biosynthesis. Functionally, catalyzes the ATP-dependent conversion of 7-carboxy-7-deazaguanine (CDG) to 7-cyano-7-deazaguanine (preQ(0)). In Laribacter hongkongensis (strain HLHK9), this protein is 7-cyano-7-deazaguanine synthase.